The primary structure comprises 412 residues: Translation initiation factor 2 subunit gamma (412 aa).

Positions 8–205 (QAEMNIGMVG…AMYEHFEPPE (198 aa)) constitute a tr-type G domain. The segment at 17–24 (GHVDHGKT) is G1. Mg(2+) is bound by residues D20, T24, G45, and S47. A GTP-binding site is contributed by 20–25 (DHGKTT). A G2 region spans residues 45 to 49 (GISIR). Positions 60, 63, 72, and 75 each coordinate Zn(2+). The tract at residues 89-92 (DSPG) is G3. GTP is bound by residues 145-148 (NKID) and 183-185 (SAQ). Residues 145–148 (NKID) form a G4 region. The interval 183–185 (SAQ) is G5.

The protein belongs to the TRAFAC class translation factor GTPase superfamily. Classic translation factor GTPase family. EIF2G subfamily. As to quaternary structure, heterotrimer composed of an alpha, a beta and a gamma chain. The cofactor is Mg(2+).

The enzyme catalyses GTP + H2O = GDP + phosphate + H(+). Functionally, eIF-2 functions in the early steps of protein synthesis by forming a ternary complex with GTP and initiator tRNA. This Methanopyrus kandleri (strain AV19 / DSM 6324 / JCM 9639 / NBRC 100938) protein is Translation initiation factor 2 subunit gamma.